The chain runs to 607 residues: Elongation factor 4 (607 aa).

The tr-type G domain occupies 11–193 (EKIRNFSIIA…QIVEKVPAPQ (183 aa)). Residues 23–28 (DHGKST) and 140–143 (NKID) contribute to the GTP site.

This sequence belongs to the TRAFAC class translation factor GTPase superfamily. Classic translation factor GTPase family. LepA subfamily.

The protein localises to the cell membrane. The enzyme catalyses GTP + H2O = GDP + phosphate + H(+). In terms of biological role, required for accurate and efficient protein synthesis under certain stress conditions. May act as a fidelity factor of the translation reaction, by catalyzing a one-codon backward translocation of tRNAs on improperly translocated ribosomes. Back-translocation proceeds from a post-translocation (POST) complex to a pre-translocation (PRE) complex, thus giving elongation factor G a second chance to translocate the tRNAs correctly. Binds to ribosomes in a GTP-dependent manner. The polypeptide is Elongation factor 4 (Lactococcus lactis subsp. cremoris (strain SK11)).